A 390-amino-acid chain; its full sequence is Lipid-A-disaccharide synthase (390 aa).

It belongs to the LpxB family.

It carries out the reaction a lipid X + a UDP-2-N,3-O-bis[(3R)-3-hydroxyacyl]-alpha-D-glucosamine = a lipid A disaccharide + UDP + H(+). Its pathway is bacterial outer membrane biogenesis; LPS lipid A biosynthesis. Condensation of UDP-2,3-diacylglucosamine and 2,3-diacylglucosamine-1-phosphate to form lipid A disaccharide, a precursor of lipid A, a phosphorylated glycolipid that anchors the lipopolysaccharide to the outer membrane of the cell. This Haemophilus ducreyi (strain 35000HP / ATCC 700724) protein is Lipid-A-disaccharide synthase.